The sequence spans 523 residues: Calcium-dependent protein kinase 1 (523 aa).

The interval 1–36 is disordered; the sequence is MGCNQSKSANDVRGNKVNHVNSKKKNNKREDTNDGE. The N-myristoyl glycine moiety is linked to residue glycine 2. A lipid anchor (S-palmitoyl cysteine) is attached at cysteine 3. The 268-residue stretch at 57–324 folds into the Protein kinase domain; the sequence is YFKVRKLGSG…AEEALNSRWI (268 aa). ATP contacts are provided by residues 63–71, lysine 86, and lysine 90; that span reads LGSGAYGEV. Serine 65 carries the post-translational modification Phosphoserine. Serine 117 is subject to Phosphoserine. Aspartate 190 serves as the catalytic Proton acceptor. Residues serine 216 and serine 219 each carry the phosphoserine modification. A Phosphothreonine modification is found at threonine 230. A Phosphoserine modification is found at serine 334. The short motif at 345–352 is the J domain autoinhibitory motif element; that stretch reads NMRKFEGS. The j domain stretch occupies residues 345 to 363; that stretch reads NMRKFEGSQKLAQAAILFI. A J domain interacts with the EF-hand domains motif is present at residues 353-363; that stretch reads QKLAQAAILFI. 4 EF-hand domains span residues 371-406, 415-450, 451-486, and 487-520; these read EERK…LRNF, NVEE…KQIL, FSEE…TSIS, and EKTW…ICDH. 20 residues coordinate Ca(2+): aspartate 384, asparagine 386, aspartate 388, glutamine 390, glutamate 395, aspartate 428, aspartate 430, asparagine 432, tyrosine 434, glutamate 439, aspartate 464, aspartate 466, serine 468, lysine 470, glutamate 475, aspartate 498, asparagine 500, aspartate 502, methionine 504, and glutamate 509.

Belongs to the protein kinase superfamily. Ser/Thr protein kinase family. CDPK subfamily. As to quaternary structure, monomer. Requires Mg(2+) as cofactor. Post-translationally, myristoylated. Myristoylation and palmitoylation are required for the localization to the parasitophorous vacuole membrane. Palmitoylated. Palmitoylation increases in merozoites in response to low level of extracellular K(+) in the host blood. Myristoylation and palmitoylation are required for the localization to the parasitophorous vacuole membrane. In terms of processing, phosphorylation at Thr-230 may regulate CDPK1 kinase activity. Phosphorylation increases in response to an increase in intracellular Ca(2+) levels. Autophosphorylated in vitro. Autophosphorylation does not affect membrane localization in vitro.

It localises to the membrane. Its subcellular location is the cell membrane. The protein localises to the parasitophorous vacuole membrane. It is found in the cytoplasm. The protein resides in the cell projection. It localises to the cilium. Its subcellular location is the flagellum. The protein localises to the host cell membrane. It catalyses the reaction L-seryl-[protein] + ATP = O-phospho-L-seryl-[protein] + ADP + H(+). The enzyme catalyses L-threonyl-[protein] + ATP = O-phospho-L-threonyl-[protein] + ADP + H(+). Activated by calcium. Upon calcium binding to the EF-hand domains, the C-terminus of the junction domain (J domain) undergoes a conformational change which results in the dissociation of the pseudo-substrate inhibitory motif from the catalytic domain. This, in turn may facilitate the autophosphorylation of the activation loop at Thr-230, which leads to the kinase activation. Calcium-dependent protein kinase which acts as a sensor and effector of intracellular Ca(2+) levels probably in part downstream of cGMP-activated PKG kinase. During the liver stage, involved in sporozoite motility and thus in sporozoite invasion of host hepatocytes, probably together with CDPK4 and CDPK5. In the mosquito midgut and during the last stage of male gamete exflagellation, may play a role in the rupture of the host erythrocyte membrane. In the mosquito midgut, required for the differentiation of the zygote into the ookinete by promoting the translational activation of a subset of repressed mRNAs; these mRNAs are kept repressed in the zygote by the DOZI- or CITH-containing mRNP complexes. Dispensable during the asexual blood stage. The protein is Calcium-dependent protein kinase 1 of Plasmodium berghei (strain Anka).